The sequence spans 495 residues: ATP synthase subunit beta, chloroplastic (495 aa).

172–179 (GGAGVGKT) contributes to the ATP binding site.

This sequence belongs to the ATPase alpha/beta chains family. As to quaternary structure, F-type ATPases have 2 components, CF(1) - the catalytic core - and CF(0) - the membrane proton channel. CF(1) has five subunits: alpha(3), beta(3), gamma(1), delta(1), epsilon(1). CF(0) has four main subunits: a(1), b(1), b'(1) and c(9-12).

It is found in the plastid. The protein localises to the chloroplast thylakoid membrane. It catalyses the reaction ATP + H2O + 4 H(+)(in) = ADP + phosphate + 5 H(+)(out). Functionally, produces ATP from ADP in the presence of a proton gradient across the membrane. The catalytic sites are hosted primarily by the beta subunits. This is ATP synthase subunit beta, chloroplastic from Hyacinthoides non-scripta (English bluebell).